The following is a 148-amino-acid chain: Putative nickel-responsive regulator (148 aa).

The Ni(2+) site is built by H88, H99, H101, and C107.

Belongs to the transcriptional regulatory CopG/NikR family. It depends on Ni(2+) as a cofactor.

Transcriptional regulator. In Helicobacter pylori (strain Shi470), this protein is Putative nickel-responsive regulator.